The sequence spans 406 residues: MSGRSRGRKSSRAKGRGKGRARARVRAAAEDAWHDEKPPQSPRLGEDSAAAQVQAGAAQGGAEPAELREEAACRLPLDCGLALRARAADERGLAAPDPDLERARSLAERLTSDTSFVGTVGALAKLRRGSRIGNRRVPGRKAPDTRSATGRGPQATVSGKPKMASAGLCAAAPVGEEKKMTEKHAGAGSPATVGSMDTLETVQLKLETMNAQADRAYLRLSRKFGQLRLHHLERRNLLIQSIPGFWGQAFQNHPQLSAFLNTKDKEVLSYLNRLEVEELGLARLGYKIKFYFGRNPYFQNKVLIKEYGCGPSGQVVSRSAPIQWLPGHDLQSLSKENPENNGSFFGWFSNHSSIESDKIVEIINEDLWPNPLQYYLISEEARGEKGKEERPGPAKLSPAPAVRQPN.

Residues 1–25 (MSGRSRGRKSSRAKGRGKGRARARV) show a composition bias toward basic residues. 3 disordered regions span residues 1–67 (MSGR…PAEL), 132–164 (IGNR…PKMA), and 382–406 (RGEK…RQPN). Residues 27–38 (AAAEDAWHDEKP) show a composition bias toward basic and acidic residues. The segment covering 49–62 (AAAQVQAGAAQGGA) has biased composition (low complexity). The span at 382–392 (RGEKGKEERPG) shows a compositional bias: basic and acidic residues.

Belongs to the nucleosome assembly protein (NAP) family. In terms of assembly, interacts with USP7.

Involved in modulation of cell growth and cellular response to gamma radiation probably via regulation of the Akt signaling pathway. Involved in regulation of p53/TP53. Suppresses p53/TP53 protein levels and promotes its ubiquitination; the function is dependent on USP7 and independent on MDM2. Proposed to displace p53/TP53 from interaction with USP7. In Mus musculus (Mouse), this protein is Testis-specific Y-encoded-like protein 5 (Tspyl5).